The chain runs to 330 residues: Probable L-asparaginase (330 aa).

One can recognise an Asparaginase/glutaminase domain in the interval 6–330 (PTIALLATGG…EKIQEMFEEY (325 aa)). Catalysis depends on T16, which acts as the O-isoaspartyl threonine intermediate. Substrate contacts are provided by residues S62 and 95–96 (TD).

This sequence belongs to the asparaginase 1 family.

The protein localises to the cytoplasm. The catalysed reaction is L-asparagine + H2O = L-aspartate + NH4(+). This chain is Probable L-asparaginase (ansA), found in Helicobacter pylori (strain ATCC 700392 / 26695) (Campylobacter pylori).